Consider the following 421-residue polypeptide: UDP-N-acetylglucosamine 1-carboxyvinyltransferase (421 aa).

Residue 22–23 (KN) coordinates phosphoenolpyruvate. UDP-N-acetyl-alpha-D-glucosamine is bound at residue arginine 93. Catalysis depends on cysteine 117, which acts as the Proton donor. Residue cysteine 117 is modified to 2-(S-cysteinyl)pyruvic acid O-phosphothioketal. Residues 122–126 (RPVDL), aspartate 308, and isoleucine 330 each bind UDP-N-acetyl-alpha-D-glucosamine.

The protein belongs to the EPSP synthase family. MurA subfamily.

It localises to the cytoplasm. The catalysed reaction is phosphoenolpyruvate + UDP-N-acetyl-alpha-D-glucosamine = UDP-N-acetyl-3-O-(1-carboxyvinyl)-alpha-D-glucosamine + phosphate. It functions in the pathway cell wall biogenesis; peptidoglycan biosynthesis. In terms of biological role, cell wall formation. Adds enolpyruvyl to UDP-N-acetylglucosamine. In Pseudomonas syringae pv. tomato (strain ATCC BAA-871 / DC3000), this protein is UDP-N-acetylglucosamine 1-carboxyvinyltransferase.